A 339-amino-acid chain; its full sequence is Probable long-chain-alcohol O-fatty-acyltransferase 7 (339 aa).

7 consecutive transmembrane segments (helical) span residues 7–27 (SLIN…CLPP), 39–59 (IFPV…SIFT), 113–133 (HLST…LYVH), 143–163 (FLLC…LTLL), 226–246 (MLIG…VVFF), 254–274 (TGEV…EVAA), and 287–307 (PVVS…WLFF).

This sequence belongs to the wax synthase family.

Its subcellular location is the membrane. It catalyses the reaction a long chain fatty alcohol + a fatty acyl-CoA = a wax ester + CoA. Functionally, catalyzes the final step in the synthesis of long-chain linear esters (waxes). The chain is Probable long-chain-alcohol O-fatty-acyltransferase 7 (AT7) from Arabidopsis thaliana (Mouse-ear cress).